Here is a 316-residue protein sequence, read N- to C-terminus: MQEFSLWCDFIERDFLENDFLKLINKGAICGATSNPSLFCEAITKSAFYKDEIAKLKGKKAKEIYETLALKDILQASSALMPLYEKDPNNGYISLEIDPFLEDDAAKSIDEAKRLFKTLNRPNVMIKVPASESGIEVVSALTQASIPVNVTLVFSPKIAGEIAQILAKEAQKRAVISVFVSRFDKEIDPLVPKNLQAQSGIINATECYYQINQHANKLTSTLFASTGVKSNSLAKDYYIKALCFKNSINTAPLEALNAYLLDPNTECQTPLKTTEIEAFKKELKVHNIDLENTAQKLLKEGLIAFKQSFEKLLSSF.

The Schiff-base intermediate with substrate role is filled by Lys-127.

This sequence belongs to the transaldolase family. Type 2 subfamily.

Its subcellular location is the cytoplasm. The catalysed reaction is D-sedoheptulose 7-phosphate + D-glyceraldehyde 3-phosphate = D-erythrose 4-phosphate + beta-D-fructose 6-phosphate. It functions in the pathway carbohydrate degradation; pentose phosphate pathway; D-glyceraldehyde 3-phosphate and beta-D-fructose 6-phosphate from D-ribose 5-phosphate and D-xylulose 5-phosphate (non-oxidative stage): step 2/3. In terms of biological role, transaldolase is important for the balance of metabolites in the pentose-phosphate pathway. The polypeptide is Transaldolase (tal) (Helicobacter pylori (strain ATCC 700392 / 26695) (Campylobacter pylori)).